Consider the following 425-residue polypeptide: Serine--tRNA ligase (425 aa).

Residue 233–235 (TAE) participates in L-serine binding. 264–266 (RRE) is a binding site for ATP. Glu287 contacts L-serine. 351 to 354 (EISS) is a binding site for ATP. An L-serine-binding site is contributed by Ser387.

It belongs to the class-II aminoacyl-tRNA synthetase family. Type-1 seryl-tRNA synthetase subfamily. Homodimer. The tRNA molecule binds across the dimer.

Its subcellular location is the cytoplasm. The enzyme catalyses tRNA(Ser) + L-serine + ATP = L-seryl-tRNA(Ser) + AMP + diphosphate + H(+). The catalysed reaction is tRNA(Sec) + L-serine + ATP = L-seryl-tRNA(Sec) + AMP + diphosphate + H(+). It functions in the pathway aminoacyl-tRNA biosynthesis; selenocysteinyl-tRNA(Sec) biosynthesis; L-seryl-tRNA(Sec) from L-serine and tRNA(Sec): step 1/1. Functionally, catalyzes the attachment of serine to tRNA(Ser). Is also able to aminoacylate tRNA(Sec) with serine, to form the misacylated tRNA L-seryl-tRNA(Sec), which will be further converted into selenocysteinyl-tRNA(Sec). This is Serine--tRNA ligase from Thermotoga maritima (strain ATCC 43589 / DSM 3109 / JCM 10099 / NBRC 100826 / MSB8).